The sequence spans 484 residues: tRNA sulfurtransferase (484 aa).

Positions 63–167 constitute a THUMP domain; the sequence is QAFGERLACI…RDKLYMVTKR (105 aa). ATP is bound by residues 185–186, K267, G289, and Q298; that span reads LI. C346 and C458 are joined by a disulfide. A Rhodanese domain is found at 406-484; that stretch reads IETNEVVIDI…GYTNVKVYRP (79 aa). C458 serves as the catalytic Cysteine persulfide intermediate.

Belongs to the ThiI family.

The protein resides in the cytoplasm. The catalysed reaction is [ThiI sulfur-carrier protein]-S-sulfanyl-L-cysteine + a uridine in tRNA + 2 reduced [2Fe-2S]-[ferredoxin] + ATP + H(+) = [ThiI sulfur-carrier protein]-L-cysteine + a 4-thiouridine in tRNA + 2 oxidized [2Fe-2S]-[ferredoxin] + AMP + diphosphate. The enzyme catalyses [ThiS sulfur-carrier protein]-C-terminal Gly-Gly-AMP + S-sulfanyl-L-cysteinyl-[cysteine desulfurase] + AH2 = [ThiS sulfur-carrier protein]-C-terminal-Gly-aminoethanethioate + L-cysteinyl-[cysteine desulfurase] + A + AMP + 2 H(+). Its pathway is cofactor biosynthesis; thiamine diphosphate biosynthesis. Functionally, catalyzes the ATP-dependent transfer of a sulfur to tRNA to produce 4-thiouridine in position 8 of tRNAs, which functions as a near-UV photosensor. Also catalyzes the transfer of sulfur to the sulfur carrier protein ThiS, forming ThiS-thiocarboxylate. This is a step in the synthesis of thiazole, in the thiamine biosynthesis pathway. The sulfur is donated as persulfide by IscS. This is tRNA sulfurtransferase from Shewanella putrefaciens (strain CN-32 / ATCC BAA-453).